We begin with the raw amino-acid sequence, 418 residues long: FK506-binding protein 3 (418 aa).

3 disordered regions span residues Pro49–Phe133, Ser172–Lys273, and Leu289–Thr309. Positions Tyr61 to Glu89 are enriched in acidic residues. Positions Lys93–Ser103 are enriched in basic residues. 2 stretches are compositionally biased toward acidic residues: residues Glu108–Phe133 and Gly186–Asp224. A compositionally biased stretch (basic and acidic residues) spans Val225 to Lys239. Over residues Pro251–Glu264 the composition is skewed to acidic residues. In terms of domain architecture, PPIase FKBP-type spans Gly332–Lys418.

It belongs to the FKBP-type PPIase family. FKBP3/4 subfamily.

It localises to the nucleus. The protein resides in the nucleolus. It catalyses the reaction [protein]-peptidylproline (omega=180) = [protein]-peptidylproline (omega=0). Inhibited by both FK506 and rapamycin. In terms of biological role, PPIases accelerate the folding of proteins. It catalyzes the cis-trans isomerization of proline imidic peptide bonds in oligopeptides. The protein is FK506-binding protein 3 (FPR3) of Kluyveromyces lactis (strain ATCC 8585 / CBS 2359 / DSM 70799 / NBRC 1267 / NRRL Y-1140 / WM37) (Yeast).